Consider the following 488-residue polypeptide: Putative sugar transporter ERD6-like 13 (488 aa).

The next 12 membrane-spanning stretches (helical) occupy residues 51 to 71, 89 to 109, 116 to 138, 151 to 171, 182 to 202, 207 to 227, 291 to 311, 324 to 344, 353 to 373, 390 to 410, 423 to 445, and 451 to 471; these read LILL…GTAA, LAEF…GAAM, VFGR…LMIA, LFLG…IVEI, AINS…GSVI, LALI…FIPE, VGIG…TFYL, VGVM…IVIV, LTVA…SFLF, GVLV…WVMI, GTLC…NFLF, and GVFF…MKMV.

Belongs to the major facilitator superfamily. Sugar transporter (TC 2.A.1.1) family.

The protein localises to the membrane. Functionally, sugar transporter. The chain is Putative sugar transporter ERD6-like 13 from Arabidopsis thaliana (Mouse-ear cress).